Here is a 296-residue protein sequence, read N- to C-terminus: Beta-lactamase (296 aa).

An N-terminal signal peptide occupies residues 1–21; the sequence is MKAYFIAILTLFTCIATVVRA. Serine 66 acts as the Acyl-ester intermediate in catalysis. 235 to 237 is a binding site for substrate; sequence KTG.

The protein belongs to the class-A beta-lactamase family.

The enzyme catalyses a beta-lactam + H2O = a substituted beta-amino acid. The chain is Beta-lactamase (cblA) from Bacteroides uniformis.